Consider the following 436-residue polypeptide: GTPase Der (436 aa).

EngA-type G domains lie at 4-167 and 176-351; these read PIVA…NKES and IRLS…ENHK. GTP contacts are provided by residues 10-17, 57-61, 119-122, 182-189, 229-233, and 294-297; these read GKPNVGKS, DTGGI, NKVD, GRPNVGKS, DTAGM, and NKWD. Residues 352 to 436 form the KH-like domain; the sequence is KRVQSSTLNE…PIHIIPRKRN (85 aa).

The protein belongs to the TRAFAC class TrmE-Era-EngA-EngB-Septin-like GTPase superfamily. EngA (Der) GTPase family. In terms of assembly, associates with the 50S ribosomal subunit.

GTPase that plays an essential role in the late steps of ribosome biogenesis. The polypeptide is GTPase Der (Staphylococcus epidermidis (strain ATCC 35984 / DSM 28319 / BCRC 17069 / CCUG 31568 / BM 3577 / RP62A)).